Here is a 298-residue protein sequence, read N- to C-terminus: MSNAREIRSKVQSVKNTQKITGAMELVAASKMRGTIVKMNNVRPYVESANTIIKNVTAASIDYPNPYLFDRDVKRVGYIVISTDRGLCGGLNINLFKHVLKEIKNNIEDRVGVDVCVIGSKAENFFAKLKDVNIVATAHYNDKDKEGSIRAIGGAVKVMLDKFTAGEIDRLYMSSNQFVSTIKQRPRLQTLLPIQDIFSAEEIKANKEKATKGHWDYIYERDIEEVLNALCIRYIEAQVRGAILENAACEQAARMMAMKNATDNASDIIDQLKLDYNKIRQAMITQELAEICSGAAAV.

Belongs to the ATPase gamma chain family. In terms of assembly, F-type ATPases have 2 components, CF(1) - the catalytic core - and CF(0) - the membrane proton channel. CF(1) has five subunits: alpha(3), beta(3), gamma(1), delta(1), epsilon(1). CF(0) has three main subunits: a, b and c.

The protein localises to the cell inner membrane. Produces ATP from ADP in the presence of a proton gradient across the membrane. The gamma chain is believed to be important in regulating ATPase activity and the flow of protons through the CF(0) complex. This Francisella tularensis subsp. tularensis (strain WY96-3418) protein is ATP synthase gamma chain.